The sequence spans 228 residues: UPF0758 protein CLI_3057 (228 aa).

The MPN domain maps to 106–228 (KINTPLDVSN…YVSMKEKGTI (123 aa)). 3 residues coordinate Zn(2+): His177, His179, and Asp190. The JAMM motif signature appears at 177–190 (HNHPSGDPTPSKED).

It belongs to the UPF0758 family.

The sequence is that of UPF0758 protein CLI_3057 from Clostridium botulinum (strain Langeland / NCTC 10281 / Type F).